The following is a 304-amino-acid chain: Mitochondrial glycine transporter (304 aa).

Solcar repeat units follow at residues Gly-3–Ala-82, Glu-106–Ala-186, and Ser-209–Arg-293. Helical transmembrane passes span Ile-9–Gln-34, Gly-57–Val-83, Leu-108–Glu-133, Gly-161–Lys-184, Ile-213–Met-239, and Gly-268–Ile-286.

The protein belongs to the mitochondrial carrier (TC 2.A.29) family. SLC25A38 subfamily.

It is found in the mitochondrion inner membrane. The enzyme catalyses glycine(in) = glycine(out). Its function is as follows. Mitochondrial glycine transporter that imports glycine into the mitochondrial matrix. Plays an important role in providing glycine for the first enzymatic step in heme biosynthesis, the condensation of glycine with succinyl-CoA to produce 5-aminolevulinate (ALA) in the mitochondrial matrix. This is Mitochondrial glycine transporter from Yarrowia lipolytica (strain CLIB 122 / E 150) (Yeast).